Here is a 291-residue protein sequence, read N- to C-terminus: Lys-63-specific deubiquitinase BRCC36 (291 aa).

Ala-2 carries the N-acetylalanine modification. Positions 12–179 (VHLESDAFLV…YTCFQSVQAQ (168 aa)) constitute an MPN domain. The Zn(2+) site is built by His-122, His-124, and Asp-135. Residues 122-135 (HSHPHITVWPSHVD) carry the JAMM motif motif. A Phosphoserine modification is found at Ser-233.

The protein belongs to the peptidase M67A family. BRCC36 subfamily. Component of the ARISC complex, at least composed of UIMC1/RAP80, ABRAXAS1, BRCC3/BRCC36, BABAM2 and BABAM1/NBA1. Component of the BRCA1-A complex, at least composed of BRCA1, BARD1, UIMC1/RAP80, ABRAXAS1, BRCC3/BRCC36, BABAM2 and BABAM1/NBA1. In the BRCA1-A complex, interacts directly with ABRAXAS1 and BABAM2. Component of the BRISC complex, at least composed of ABRAXAS2, BRCC3/BRCC36, BABAM2 and BABAM1/NBA1. Identified in a complex with SHMT2 and the other subunits of the BRISC complex. In the BRISC complex, interacts directly with ABRAXAS2. Identified in a complex with ABRAXAS2 and NUMA1. The BRISC complex interacts with the CSN complex. Component of the BRCA1/BRCA2 containing complex (BRCC), which also contains BRCA1, BRCA2, BARD1, BABAM2 and RAD51. BRCC is a ubiquitin E3 ligase complex that enhances cellular survival following DNA damage. Interacts with BRCA1. Binds polyubiquitin. Interacts with PWWP2B. Interacts with HDAC1; this interaction is enhanced in the presence of PWWP2B. Requires Zn(2+) as cofactor.

It localises to the nucleus. The protein localises to the cytoplasm. The protein resides in the cytoskeleton. It is found in the spindle pole. Its function is as follows. Metalloprotease that specifically cleaves 'Lys-63'-linked polyubiquitin chains. Does not have activity toward 'Lys-48'-linked polyubiquitin chains. Component of the BRCA1-A complex, a complex that specifically recognizes 'Lys-63'-linked ubiquitinated histones H2A and H2AX at DNA lesions sites, leading to target the BRCA1-BARD1 heterodimer to sites of DNA damage at double-strand breaks (DSBs). In the BRCA1-A complex, it specifically removes 'Lys-63'-linked ubiquitin on histones H2A and H2AX, antagonizing the RNF8-dependent ubiquitination at double-strand breaks (DSBs). Catalytic subunit of the BRISC complex, a multiprotein complex that specifically cleaves 'Lys-63'-linked ubiquitin in various substrates. Mediates the specific 'Lys-63'-specific deubiquitination associated with the COP9 signalosome complex (CSN), via the interaction of the BRISC complex with the CSN complex. The BRISC complex is required for normal mitotic spindle assembly and microtubule attachment to kinetochores via its role in deubiquitinating NUMA1. Plays a role in interferon signaling via its role in the deubiquitination of the interferon receptor IFNAR1; deubiquitination increases IFNAR1 activity by enhancing its stability and cell surface expression. Acts as a regulator of the NLRP3 inflammasome by mediating deubiquitination of NLRP3, leading to NLRP3 inflammasome assembly. Down-regulates the response to bacterial lipopolysaccharide (LPS) via its role in IFNAR1 deubiquitination. Deubiquitinates HDAC1 and PWWP2B leading to their stabilization. The polypeptide is Lys-63-specific deubiquitinase BRCC36 (Brcc3) (Rattus norvegicus (Rat)).